The primary structure comprises 130 residues: Small ribosomal subunit protein uS11 (130 aa).

This sequence belongs to the universal ribosomal protein uS11 family. In terms of assembly, part of the 30S ribosomal subunit. Interacts with proteins S7 and S18. Binds to IF-3.

In terms of biological role, located on the platform of the 30S subunit, it bridges several disparate RNA helices of the 16S rRNA. Forms part of the Shine-Dalgarno cleft in the 70S ribosome. This chain is Small ribosomal subunit protein uS11, found in Synechococcus sp. (strain CC9902).